A 186-amino-acid chain; its full sequence is Transcription factor HES-3 (186 aa).

The bHLH domain maps to 1–49 (MEKKRRARINVSLEQLKSLLEKHYSHQIRKRKLEKADILELSVKYMRSL). Residues 65-99 (QPSGFRSCLPGVSQLLRRGDEVGSGLRCPLVPESA) enclose the Orange domain. Residues 128–186 (APAAGGPRSPPPLLLLPESLPGSSASVPPPQPASSRCAESPGLGLRVWRPWGSPGDDLN) form a disordered region. The segment covering 142 to 153 (LLPESLPGSSAS) has biased composition (low complexity). A WRPW motif motif is present at residues 175-178 (WRPW).

Transcription repression requires formation of a complex with a corepressor protein of the Groucho/TLE family.

It is found in the nucleus. Transcriptional repressor of genes that require a bHLH protein for their transcription. This Homo sapiens (Human) protein is Transcription factor HES-3 (HES3).